The following is a 61-amino-acid chain: UPF0434 protein TM1040_0056 (61 aa).

Belongs to the UPF0434 family.

This Ruegeria sp. (strain TM1040) (Silicibacter sp.) protein is UPF0434 protein TM1040_0056.